The following is a 138-amino-acid chain: Putative pre-16S rRNA nuclease (138 aa).

The protein belongs to the YqgF nuclease family.

Its subcellular location is the cytoplasm. Could be a nuclease involved in processing of the 5'-end of pre-16S rRNA. The chain is Putative pre-16S rRNA nuclease from Caldicellulosiruptor saccharolyticus (strain ATCC 43494 / DSM 8903 / Tp8T 6331).